The primary structure comprises 256 residues: Late embryogenesis abundant protein 32 (256 aa).

A compositionally biased stretch (basic and acidic residues) spans 1 to 14 (MSQEQPRRPREPVK). Residues 1 to 20 (MSQEQPRRPREPVKYGDVFE) form a disordered region. A Nuclear localization signal (NLS) motif is present at residues 5-9 (QPRRP). SMP domains follow at residues 13 to 66 (VKYG…TTNI), 130 to 187 (ITIG…HNAT), and 195 to 253 (IKLR…LNER).

This sequence belongs to the LEA type SMP family. Embryo specific, only in dry mature seeds. Expressed at low levels.

It localises to the cytoplasm. It is found in the nucleus. In terms of biological role, LEA proteins are late embryonic proteins abundant in higher plant seed embryos. The function of those proteins is not known. The chain is Late embryogenesis abundant protein 32 from Arabidopsis thaliana (Mouse-ear cress).